Reading from the N-terminus, the 90-residue chain is UPF0223 protein SH1855 (90 aa).

The protein belongs to the UPF0223 family.

The polypeptide is UPF0223 protein SH1855 (Staphylococcus haemolyticus (strain JCSC1435)).